The following is a 506-amino-acid chain: Maturase K (506 aa).

It belongs to the intron maturase 2 family. MatK subfamily.

It localises to the plastid. The protein resides in the chloroplast. Its function is as follows. Usually encoded in the trnK tRNA gene intron. Probably assists in splicing its own and other chloroplast group II introns. The polypeptide is Maturase K (Lactuca sativa (Garden lettuce)).